Reading from the N-terminus, the 976-residue chain is 3-hydroxy-3-methylglutaryl-coenzyme A reductase (976 aa).

Topologically, residues methionine 1–aspartate 36 are lumenal. One can recognise an SSD domain in the interval aspartate 36–isoleucine 217. Residues isoleucine 37–serine 57 traverse the membrane as a helical segment. Residues methionine 58–lysine 64 are Cytoplasmic-facing. Residues phenylalanine 65–valine 85 form a helical membrane-spanning segment. Topologically, residues threonine 86–glycine 90 are lumenal. The helical transmembrane segment at valine 91 to phenylalanine 111 threads the bilayer. The Cytoplasmic segment spans residues glutamate 112–aspartate 169. A helical transmembrane segment spans residues tyrosine 170 to glutamine 190. The Lumenal portion of the chain corresponds to glutamine 191 to cysteine 193. The helical transmembrane segment at phenylalanine 194–isoleucine 214 threads the bilayer. Residues leucine 215–lysine 272 are Cytoplasmic-facing. Residues phenylalanine 273–proline 293 form a helical membrane-spanning segment. Residues phenylalanine 294–proline 401 lie on the Lumenal side of the membrane. A helical membrane pass occupies residues valine 402–phenylalanine 422. At asparagine 423–glutamate 976 the chain is on the cytoplasmic side. Glutamate 618 acts as the Charge relay system in catalysis. Serine 624–lysine 630 serves as a coordination point for CoA. NADP(+)-binding positions include serine 685–phenylalanine 687 and aspartate 712–serine 720. The active-site Charge relay system is the lysine 752. Valine 781–lysine 783 contributes to the CoA binding site. The Charge relay system role is filled by aspartate 828. Alanine 923–histidine 924 contributes to the CoA binding site. Residue histidine 924 is the Proton donor of the active site. The segment at glutamine 926 to proline 954 is disordered. Asparagine 928–arginine 929 is a binding site for NADP(+). The span at asparagine 928–serine 941 shows a compositional bias: polar residues. Residues histidine 943–cysteine 953 are compositionally biased toward basic and acidic residues.

It belongs to the HMG-CoA reductase family.

It localises to the endoplasmic reticulum membrane. It carries out the reaction (R)-mevalonate + 2 NADP(+) + CoA = (3S)-3-hydroxy-3-methylglutaryl-CoA + 2 NADPH + 2 H(+). Its pathway is metabolic intermediate biosynthesis; (R)-mevalonate biosynthesis; (R)-mevalonate from acetyl-CoA: step 3/3. In terms of biological role, HMG-CoA reductase; part of the first module of ergosterol biosynthesis pathway that includes the early steps of the pathway, conserved across all eukaryotes, and which results in the formation of mevalonate from acetyl-coenzyme A (acetyl-CoA). In this module, the cytosolic acetyl-CoA acetyltransferase catalyzes the formation of acetoacetyl-CoA. The hydroxymethylglutaryl-CoA synthase then condenses acetyl-CoA with acetoacetyl-CoA to form HMG-CoA. The rate-limiting step of the early module is the reduction to mevalonate by the 3-hydroxy-3-methylglutaryl-coenzyme A (HMG-CoA) reductase HMGR. In Fusarium fujikuroi (Bakanae and foot rot disease fungus), this protein is 3-hydroxy-3-methylglutaryl-coenzyme A reductase.